Consider the following 424-residue polypeptide: Cyclin-dependent kinase D-1 (424 aa).

The Protein kinase domain maps to 19–299; it reads YLKREVLGEG…AQQALEHRYF (281 aa). Residues 25–33 and Lys48 each bind ATP; that span reads LGEGTYGVV. Thr29 bears the Phosphothreonine mark. The residue at position 30 (Tyr30) is a Phosphotyrosine. Asp141 (proton acceptor) is an active-site residue. Ser168 is modified (phosphoserine). Thr174 bears the Phosphothreonine mark. Disordered regions lie at residues 303-337 and 359-424; these read PAPT…PVVL and ADRT…GYTE. Over residues 359-374 the composition is skewed to basic and acidic residues; sequence ADRTEEHPSGARHMDD.

Belongs to the protein kinase superfamily. CMGC Ser/Thr protein kinase family. CDC2/CDKX subfamily.

It is found in the nucleus. It carries out the reaction L-seryl-[protein] + ATP = O-phospho-L-seryl-[protein] + ADP + H(+). The catalysed reaction is L-threonyl-[protein] + ATP = O-phospho-L-threonyl-[protein] + ADP + H(+). It catalyses the reaction [DNA-directed RNA polymerase] + ATP = phospho-[DNA-directed RNA polymerase] + ADP + H(+). This Oryza sativa subsp. indica (Rice) protein is Cyclin-dependent kinase D-1 (CDKD-1).